We begin with the raw amino-acid sequence, 405 residues long: Lariat debranching enzyme (405 aa).

Residues Cys-11, His-13, Asp-40, and Asn-85 each coordinate a divalent metal cation. Residues 125-159 are lariat recognition loop; sequence SGIWKEWDFNKQRPDWNDLENNNWKANIRNLYHVR. A divalent metal cation is bound by residues His-179, His-231, and His-233. The disordered stretch occupies residues 242 to 277; sequence HNKRSHEPPNKSTSKTKKNNNEIDLDLSSDEDERSG. Residues 264-274 show a composition bias toward acidic residues; sequence IDLDLSSDEDE. Position 269 is a phosphoserine (Ser-269).

The protein belongs to the lariat debranching enzyme family. Fe(2+) is required as a cofactor. The cofactor is Zn(2+). Requires Mn(2+) as cofactor.

The protein localises to the nucleus. The protein resides in the cytoplasm. Its activity is regulated as follows. Active in presence of diverse metals including Fe(2+), Zn(2+) and Mn(2+). Binds two metal cations in two adjacent alpha and beta metal-binding pockets. The activity is the highest with Fe(2+) bound to the 2 metal-binding sites. Activity is low with Zn(2+) and Mn(2+). In terms of biological role, cleaves the 2'-5' phosphodiester linkage at the branch point of lariat intron pre-mRNAs after splicing and converts them into linear molecules that are subsequently degraded, thereby facilitating ribonucleotide turnover. It also participates in Ty1 retrovirus-like transposition via an RNA lariat intermediate in cDNA synthesis. The protein is Lariat debranching enzyme (DBR1) of Saccharomyces cerevisiae (strain ATCC 204508 / S288c) (Baker's yeast).